The primary structure comprises 515 residues: Cytoplasmic tRNA 2-thiolation protein 2 (515 aa).

Disordered regions lie at residues 1 to 24 and 188 to 217; these read MCQV…RPSR and LGAG…ARPP. An N-acetylcysteine modification is found at Cys2. A phosphoserine mark is found at Ser415, Ser419, Ser435, and Ser508.

This sequence belongs to the CTU2/NCS2 family. As to quaternary structure, component of a complex at least composed of URM1, CTU2/NCS2 and CTU1/ATPBD3.

The protein resides in the cytoplasm. Its pathway is tRNA modification; 5-methoxycarbonylmethyl-2-thiouridine-tRNA biosynthesis. Its function is as follows. Plays a central role in 2-thiolation of mcm(5)S(2)U at tRNA wobble positions of tRNA(Lys), tRNA(Glu) and tRNA(Gln). May act by forming a heterodimer with CTU1/ATPBD3 that ligates sulfur from thiocarboxylated URM1 onto the uridine of tRNAs at wobble position. The polypeptide is Cytoplasmic tRNA 2-thiolation protein 2 (Homo sapiens (Human)).